The primary structure comprises 518 residues: Tropomyosin-1, isoforms 33/34 (518 aa).

Residues 14-267 are a coiled coil; the sequence is DKDGALERAL…DDLIVEKERY (254 aa). 2 disordered regions span residues 101–125 and 288–518; these read RSEE…ESER and FWNP…APPA. Over residues 293–305 the composition is skewed to pro residues; sequence NPKPPTPKLPTPT. A compositionally biased stretch (low complexity) spans 318–348; it reads AAEAAAAAEAEAAEAAAAAGEAGPDGAPAAP. 2 stretches are compositionally biased toward pro residues: residues 357 to 374 and 394 to 405; these read EPTP…PPPF and EPPPPGSEPEPV. Over residues 406–518 the composition is skewed to low complexity; sequence PAAEGEAAPA…AAAEGEAPPA (113 aa).

It belongs to the tropomyosin family. As to quaternary structure, homodimer. In terms of tissue distribution, both isoforms are only expressed in indirect flight muscles.

It localises to the cytoplasm. It is found in the cytoskeleton. Its function is as follows. Tropomyosin, in association with the troponin complex, plays a central role in the calcium dependent regulation of muscle contraction. The chain is Tropomyosin-1, isoforms 33/34 (Tm1) from Drosophila melanogaster (Fruit fly).